The following is a 122-amino-acid chain: Large ribosomal subunit protein bL17 (122 aa).

Belongs to the bacterial ribosomal protein bL17 family. In terms of assembly, part of the 50S ribosomal subunit. Contacts protein L32.

In Nautilia profundicola (strain ATCC BAA-1463 / DSM 18972 / AmH), this protein is Large ribosomal subunit protein bL17.